Consider the following 162-residue polypeptide: Transcription elongation factor GreA (162 aa).

Residues 1-28 are a coiled coil; that stretch reads MQKEPMLEETYRKLSEELEQLKSVERGV.

Belongs to the GreA/GreB family.

Necessary for efficient RNA polymerase transcription elongation past template-encoded arresting sites. The arresting sites in DNA have the property of trapping a certain fraction of elongating RNA polymerases that pass through, resulting in locked ternary complexes. Cleavage of the nascent transcript by cleavage factors such as GreA or GreB allows the resumption of elongation from the new 3'terminus. GreA releases sequences of 2 to 3 nucleotides. The protein is Transcription elongation factor GreA of Sulfurovum sp. (strain NBC37-1).